Reading from the N-terminus, the 164-residue chain is MTLDDDLNRIAEQEKELSFDAFDLTTAWQLGKLLQELATERCLGVAIDVTLHSMPVFYAALPGVTPDNVNWVRRKRNMVFRYFRSSYASGLKLKKDGKTVEDNGLSGDDYAPHGGSFPINVKGTGCIGAVTVSGLPQRDDHNLVVEALALMLAKDLDTLRLAPL.

Belongs to the UPF0303 family.

This Rhizobium etli (strain CIAT 652) protein is UPF0303 protein RHECIAT_CH0003058.